Consider the following 150-residue polypeptide: Cyanate hydratase (150 aa).

Residues Arg91, Glu94, and Ser117 contribute to the active site.

This sequence belongs to the cyanase family.

The enzyme catalyses cyanate + hydrogencarbonate + 3 H(+) = NH4(+) + 2 CO2. In terms of biological role, catalyzes the reaction of cyanate with bicarbonate to produce ammonia and carbon dioxide. The polypeptide is Cyanate hydratase (Synechococcus sp. (strain CC9311)).